The sequence spans 229 residues: Ion-translocating oxidoreductase complex subunit E (229 aa).

5 helical membrane-spanning segments follow: residues 58 to 78, 82 to 102, 105 to 125, 147 to 167, and 201 to 221; these read LGLG…ISLF, IPHD…VTTI, LMNA…PLIV, AFDG…LGAI, and GLLL…ILAV.

This sequence belongs to the NqrDE/RnfAE family. The complex is composed of six subunits: RnfA, RnfB, RnfC, RnfD, RnfE and RnfG.

It localises to the cell inner membrane. In terms of biological role, part of a membrane-bound complex that couples electron transfer with translocation of ions across the membrane. This chain is Ion-translocating oxidoreductase complex subunit E, found in Glaesserella parasuis serovar 5 (strain SH0165) (Haemophilus parasuis).